An 829-amino-acid polypeptide reads, in one-letter code: Leucine--tRNA ligase (829 aa).

Residues Pro-34–His-44 carry the 'HIGH' region motif. Positions Lys-591–Ser-595 match the 'KMSKS' region motif. Lys-594 contributes to the ATP binding site.

It belongs to the class-I aminoacyl-tRNA synthetase family.

It localises to the cytoplasm. It carries out the reaction tRNA(Leu) + L-leucine + ATP = L-leucyl-tRNA(Leu) + AMP + diphosphate. This chain is Leucine--tRNA ligase, found in Ehrlichia chaffeensis (strain ATCC CRL-10679 / Arkansas).